Here is a 438-residue protein sequence, read N- to C-terminus: Xylose isomerase (438 aa).

Residues His-103 and Asp-106 contribute to the active site. Residues Glu-234, Glu-270, His-273, Asp-298, Asp-309, Asp-311, and Asp-341 each coordinate Mg(2+).

The protein belongs to the xylose isomerase family. As to quaternary structure, homotetramer. Mg(2+) is required as a cofactor.

It localises to the cytoplasm. It catalyses the reaction alpha-D-xylose = alpha-D-xylulofuranose. The protein is Xylose isomerase of Bacteroides thetaiotaomicron (strain ATCC 29148 / DSM 2079 / JCM 5827 / CCUG 10774 / NCTC 10582 / VPI-5482 / E50).